The primary structure comprises 337 residues: Holliday junction branch migration complex subunit RuvB (337 aa).

A large ATPase domain (RuvB-L) region spans residues 4 to 185; the sequence is ADRLISNSFE…FGITQRLEYY (182 aa). ATP-binding positions include isoleucine 24, arginine 25, glycine 66, lysine 69, threonine 70, threonine 71, 132–134, arginine 175, tyrosine 185, and arginine 222; that span reads EDY. Threonine 70 contacts Mg(2+). The segment at 186–256 is small ATPAse domain (RuvB-S); the sequence is KVDDLKDIVQ…TAKKALDMLD (71 aa). The tract at residues 259 to 337 is head domain (RuvB-H); the sequence is SSGFDYMDRK…HFGLDIPEAR (79 aa). DNA contacts are provided by arginine 314 and arginine 319.

It belongs to the RuvB family. As to quaternary structure, homohexamer. Forms an RuvA(8)-RuvB(12)-Holliday junction (HJ) complex. HJ DNA is sandwiched between 2 RuvA tetramers; dsDNA enters through RuvA and exits via RuvB. An RuvB hexamer assembles on each DNA strand where it exits the tetramer. Each RuvB hexamer is contacted by two RuvA subunits (via domain III) on 2 adjacent RuvB subunits; this complex drives branch migration. In the full resolvosome a probable DNA-RuvA(4)-RuvB(12)-RuvC(2) complex forms which resolves the HJ.

It is found in the cytoplasm. It catalyses the reaction ATP + H2O = ADP + phosphate + H(+). In terms of biological role, the RuvA-RuvB-RuvC complex processes Holliday junction (HJ) DNA during genetic recombination and DNA repair, while the RuvA-RuvB complex plays an important role in the rescue of blocked DNA replication forks via replication fork reversal (RFR). RuvA specifically binds to HJ cruciform DNA, conferring on it an open structure. The RuvB hexamer acts as an ATP-dependent pump, pulling dsDNA into and through the RuvAB complex. RuvB forms 2 homohexamers on either side of HJ DNA bound by 1 or 2 RuvA tetramers; 4 subunits per hexamer contact DNA at a time. Coordinated motions by a converter formed by DNA-disengaged RuvB subunits stimulates ATP hydrolysis and nucleotide exchange. Immobilization of the converter enables RuvB to convert the ATP-contained energy into a lever motion, pulling 2 nucleotides of DNA out of the RuvA tetramer per ATP hydrolyzed, thus driving DNA branch migration. The RuvB motors rotate together with the DNA substrate, which together with the progressing nucleotide cycle form the mechanistic basis for DNA recombination by continuous HJ branch migration. Branch migration allows RuvC to scan DNA until it finds its consensus sequence, where it cleaves and resolves cruciform DNA. This Photobacterium profundum (strain SS9) protein is Holliday junction branch migration complex subunit RuvB.